Here is a 427-residue protein sequence, read N- to C-terminus: Proteinase-activated receptor 1 (427 aa).

Residues 1–21 (MGPRWLLLWAAGLGLCSPLVS) form the signal peptide. Residues 22–41 (ARTRGPRPGTDPTNGTLGPR) constitute a propeptide, removed for receptor activation. Residues 23–87 (RTRGPRPGTD…RSSPPQKSPP (65 aa)) form a disordered region. Asparagine 35 is a glycosylation site (N-linked (GlcNAc...) asparagine). Residues 42–104 (SFFLRNSNDG…SGYLTSAWLT (63 aa)) lie on the Extracellular side of the membrane. Positions 58–68 (PEDEDSSEGEF) are enriched in acidic residues. The N-linked (GlcNAc...) asparagine glycan is linked to asparagine 77. The helical transmembrane segment at 105 to 130 (VFIPSVYTGVFLVSLPLNIMAVVVFV) threads the bilayer. The Cytoplasmic segment spans residues 131-139 (LKMKVKKPA). The chain crosses the membrane as a helical span at residues 140 to 159 (VVYMLHLAAADVLFVCVLPF). Over 160–178 (KISYYFSGSDWRFGSAMCR) the chain is Extracellular. Cysteine 177 and cysteine 256 are oxidised to a cystine. The helical transmembrane segment at 179–200 (FVTAAFYGNMYASIMLMTAISV) threads the bilayer. Residues 201 to 220 (DRFLAVVYPIQSLSWRTLGR) lie on the Cytoplasmic side of the membrane. A helical transmembrane segment spans residues 221 to 241 (ASFICLAIWAMAIAGVAPLLL). Residues 242 to 270 (QEQATQVPGLNITACHDVLNQTLLEGYYS) lie on the Extracellular side of the membrane. N-linked (GlcNAc...) asparagine glycans are attached at residues asparagine 252 and asparagine 261. Residues 271-290 (YYFSAFSAVFFFVPLTLSTV) traverse the membrane as a helical segment. Residues 291–313 (SYVSIIRCLSSSTVANQNKKSRA) lie on the Cytoplasmic side of the membrane. Residues 314 to 336 (LLLSAAVFCIFILCFGPTNILLL) traverse the membrane as a helical segment. Over 337–351 (LHYAFLSSDPMTEAA) the chain is Extracellular. The chain crosses the membrane as a helical span at residues 352-376 (YFAYLLCVCVSSISCCIDPLIYYYA). Over 377-427 (SSECQRHLFAILHCKESSDPGSCNSSGQLMPSKMDTCSSNLSSSLYKKLLT) the chain is Cytoplasmic. Phosphoserine is present on serine 420.

This sequence belongs to the G-protein coupled receptor 1 family. Proteolytic cleavage by thrombin generates a new N-terminus that functions as a tethered ligand. Also proteolytically cleaved by cathepsin CTSG. Post-translationally, phosphorylated in the C-terminal tail; probably mediating desensitization prior to the uncoupling and internalization of the receptor.

Its subcellular location is the cell membrane. High affinity receptor that binds the activated thrombin, leading to calcium release from intracellular stores. The thrombin-activated receptor signaling pathway is mediated through PTX-insensitive G proteins, activation of phospholipase C resulting in the production of 1D-myo-inositol 1,4,5-trisphosphate (InsP3) which binds to InsP3 receptors causing calcium release from the stores. In astrocytes, the calcium released into the cytosol allows the Ca(2+)-dependent release of L-glutamate into the synaptic cleft through BEST1, that targets the neuronal postsynaptic GRIN2A/NMDAR receptor resulting in the synaptic plasticity regulation. May play a role in platelets activation and in vascular development. Mediates up-regulation of pro-inflammatory cytokines, such as MCP-1/CCL2 and IL6, triggered by coagulation factor Xa (F10) in cardiac fibroblasts and umbilical vein endothelial cells. In Bos taurus (Bovine), this protein is Proteinase-activated receptor 1.